The chain runs to 440 residues: 3-phosphoshikimate 1-carboxyvinyltransferase (440 aa).

3-phosphoshikimate contacts are provided by Lys25, Ser26, and Arg30. Lys25 serves as a coordination point for phosphoenolpyruvate. Residues Gly96 and Arg124 each contribute to the phosphoenolpyruvate site. 4 residues coordinate 3-phosphoshikimate: Ser168, Gln169, Asp310, and Lys337. Gln169 lines the phosphoenolpyruvate pocket. Asp310 serves as the catalytic Proton acceptor. Positions 341, 382, and 409 each coordinate phosphoenolpyruvate.

It belongs to the EPSP synthase family. In terms of assembly, monomer.

It is found in the cytoplasm. It carries out the reaction 3-phosphoshikimate + phosphoenolpyruvate = 5-O-(1-carboxyvinyl)-3-phosphoshikimate + phosphate. It functions in the pathway metabolic intermediate biosynthesis; chorismate biosynthesis; chorismate from D-erythrose 4-phosphate and phosphoenolpyruvate: step 6/7. Functionally, catalyzes the transfer of the enolpyruvyl moiety of phosphoenolpyruvate (PEP) to the 5-hydroxyl of shikimate-3-phosphate (S3P) to produce enolpyruvyl shikimate-3-phosphate and inorganic phosphate. The sequence is that of 3-phosphoshikimate 1-carboxyvinyltransferase from Chlamydia trachomatis serovar A (strain ATCC VR-571B / DSM 19440 / HAR-13).